Consider the following 254-residue polypeptide: tRNA (guanine-N(1)-)-methyltransferase (254 aa).

S-adenosyl-L-methionine is bound by residues glycine 119 and 139–144 (IGDFVL).

This sequence belongs to the RNA methyltransferase TrmD family. In terms of assembly, homodimer.

It is found in the cytoplasm. The catalysed reaction is guanosine(37) in tRNA + S-adenosyl-L-methionine = N(1)-methylguanosine(37) in tRNA + S-adenosyl-L-homocysteine + H(+). In terms of biological role, specifically methylates guanosine-37 in various tRNAs. The polypeptide is tRNA (guanine-N(1)-)-methyltransferase (Dechloromonas aromatica (strain RCB)).